The primary structure comprises 791 residues: Sphingomyelin phosphodiesterase 4 (791 aa).

The chain crosses the membrane as a helical span at residues 755 to 775 (LFALLSFGLFSSTGLILIISF).

It depends on Mg(2+) as a cofactor.

The protein resides in the endoplasmic reticulum membrane. It localises to the golgi apparatus membrane. Its subcellular location is the nucleus envelope. The protein localises to the cell membrane. It is found in the sarcolemma. The enzyme catalyses a sphingomyelin + H2O = phosphocholine + an N-acylsphing-4-enine + H(+). Its function is as follows. Catalyzes the hydrolysis of membrane sphingomyelin to form phosphorylcholine and ceramide. It has a relevant role in the homeostasis of membrane sphingolipids, thereby influencing membrane integrity, and endoplasmic reticulum organization and function. May sensitize cells to DNA damage-induced apoptosis. The sequence is that of Sphingomyelin phosphodiesterase 4 (smpd4) from Danio rerio (Zebrafish).